Here is a 134-residue protein sequence, read N- to C-terminus: Cytochrome b (134 aa).

Transmembrane regions (helical) follow at residues 33–53, 77–98, and 113–133; these read FGSL…FLAM, WLLR…YLHV, and WNIG…GYVL. Heme b contacts are provided by H83 and H97.

This sequence belongs to the cytochrome b family. In terms of assembly, the cytochrome bc1 complex contains 11 subunits: 3 respiratory subunits (MT-CYB, CYC1 and UQCRFS1), 2 core proteins (UQCRC1 and UQCRC2) and 6 low-molecular weight proteins (UQCRH/QCR6, UQCRB/QCR7, UQCRQ/QCR8, UQCR10/QCR9, UQCR11/QCR10 and a cleavage product of UQCRFS1). This cytochrome bc1 complex then forms a dimer. The cofactor is heme b.

It localises to the mitochondrion inner membrane. In terms of biological role, component of the ubiquinol-cytochrome c reductase complex (complex III or cytochrome b-c1 complex) that is part of the mitochondrial respiratory chain. The b-c1 complex mediates electron transfer from ubiquinol to cytochrome c. Contributes to the generation of a proton gradient across the mitochondrial membrane that is then used for ATP synthesis. This is Cytochrome b (MT-CYB) from Chiroderma salvini (Salvin's big-eyed bat).